We begin with the raw amino-acid sequence, 167 residues long: HVA22-like protein b (167 aa).

3 consecutive transmembrane segments (helical) span residues 18-38 (VIAG…RAIE), 47-67 (QWLT…TFFR), and 68-88 (LLEW…WLVL).

This sequence belongs to the DP1 family. As to expression, predominantly expressed in flower buds.

It is found in the membrane. This chain is HVA22-like protein b (HVA22B), found in Arabidopsis thaliana (Mouse-ear cress).